The following is a 135-amino-acid chain: Ribosome-binding factor A (135 aa).

Belongs to the RbfA family. In terms of assembly, monomer. Binds 30S ribosomal subunits, but not 50S ribosomal subunits or 70S ribosomes.

It is found in the cytoplasm. Functionally, one of several proteins that assist in the late maturation steps of the functional core of the 30S ribosomal subunit. Associates with free 30S ribosomal subunits (but not with 30S subunits that are part of 70S ribosomes or polysomes). Required for efficient processing of 16S rRNA. May interact with the 5'-terminal helix region of 16S rRNA. In Methylobacterium nodulans (strain LMG 21967 / CNCM I-2342 / ORS 2060), this protein is Ribosome-binding factor A.